We begin with the raw amino-acid sequence, 442 residues long: Serine--tRNA ligase (442 aa).

244–246 is a binding site for L-serine; the sequence is TAE. 275-277 is a binding site for ATP; that stretch reads RAE. Position 298 (Glu-298) interacts with L-serine. 365–368 contributes to the ATP binding site; it reads EISS. Ser-400 serves as a coordination point for L-serine.

The protein belongs to the class-II aminoacyl-tRNA synthetase family. Type-1 seryl-tRNA synthetase subfamily. As to quaternary structure, homodimer. The tRNA molecule binds across the dimer.

It localises to the cytoplasm. The enzyme catalyses tRNA(Ser) + L-serine + ATP = L-seryl-tRNA(Ser) + AMP + diphosphate + H(+). The catalysed reaction is tRNA(Sec) + L-serine + ATP = L-seryl-tRNA(Sec) + AMP + diphosphate + H(+). It participates in aminoacyl-tRNA biosynthesis; selenocysteinyl-tRNA(Sec) biosynthesis; L-seryl-tRNA(Sec) from L-serine and tRNA(Sec): step 1/1. In terms of biological role, catalyzes the attachment of serine to tRNA(Ser). Is also able to aminoacylate tRNA(Sec) with serine, to form the misacylated tRNA L-seryl-tRNA(Sec), which will be further converted into selenocysteinyl-tRNA(Sec). The polypeptide is Serine--tRNA ligase (Bradyrhizobium sp. (strain ORS 278)).